Consider the following 577-residue polypeptide: Arginine--tRNA ligase (577 aa).

Positions Pro-122–His-132 match the 'HIGH' region motif.

The protein belongs to the class-I aminoacyl-tRNA synthetase family. As to quaternary structure, monomer.

The protein localises to the cytoplasm. It carries out the reaction tRNA(Arg) + L-arginine + ATP = L-arginyl-tRNA(Arg) + AMP + diphosphate. The chain is Arginine--tRNA ligase from Salmonella paratyphi A (strain ATCC 9150 / SARB42).